The sequence spans 466 residues: Soluble pyridine nucleotide transhydrogenase (466 aa).

FAD is bound at residue 36–45 (ERYQNVGGGC).

It belongs to the class-I pyridine nucleotide-disulfide oxidoreductase family. Homooligomer; probable homooctamer. It depends on FAD as a cofactor.

It localises to the cytoplasm. It carries out the reaction NAD(+) + NADPH = NADH + NADP(+). Functionally, conversion of NADPH, generated by peripheral catabolic pathways, to NADH, which can enter the respiratory chain for energy generation. This is Soluble pyridine nucleotide transhydrogenase from Escherichia coli O157:H7.